The following is a 366-amino-acid chain: uncharacterized protein (366 aa).

The CP-type G domain occupies 59–222; sequence LNILHGIGET…LYDTPGIINN (164 aa).

The protein belongs to the TRAFAC class YlqF/YawG GTPase family.

In terms of biological role, binds GTP and GDP. This is an uncharacterized protein from Bacillus subtilis (strain 168).